The chain runs to 92 residues: Progonadoliberin-1 (92 aa).

A signal peptide spans 1 to 23; the sequence is MGLIPKLLAGLVLLTLCVENGSG. The residue at position 24 (glutamine 24) is a Pyrrolidone carboxylic acid. A Glycine amide modification is found at glycine 33.

It belongs to the GnRH family. In terms of processing, the precursor is cleaved by ACE, which removes the Gly-Lys-Arg peptide at the C-terminus, leading to mature hormone. The mature form of Gonadoliberin-1 is also cleaved and degraded by ACE.

It localises to the secreted. Stimulates the secretion of gonadotropins; it stimulates the secretion of both luteinizing and follicle-stimulating hormones. This chain is Progonadoliberin-1 (GNRH1), found in Cavia porcellus (Guinea pig).